The following is a 627-amino-acid chain: DNA mismatch repair protein MutL (627 aa).

The span at 354-364 (DEKPPEKKVPE) shows a compositional bias: basic and acidic residues. The segment at 354-374 (DEKPPEKKVPEKSTAPSYSPM) is disordered.

Belongs to the DNA mismatch repair MutL/HexB family.

Its function is as follows. This protein is involved in the repair of mismatches in DNA. It is required for dam-dependent methyl-directed DNA mismatch repair. May act as a 'molecular matchmaker', a protein that promotes the formation of a stable complex between two or more DNA-binding proteins in an ATP-dependent manner without itself being part of a final effector complex. Overexpression of mutSL partially suppresses the high spontaneous mutation frequency of a ytkD/mutM/mutY triple disruption which lacks the system required to prevent damage by oxidized guanine (8-oxo-dGTP). This suggests that MutSL also functions to repair mismatches due to oxidative stress in both growing and stationary phase cells. This chain is DNA mismatch repair protein MutL, found in Bacillus subtilis (strain 168).